The chain runs to 156 residues: Enhancer of split M1 protein (156 aa).

The first 19 residues, 1–19 (MMSQTLTLCCLGLVACVYG), serve as a signal peptide directing secretion. 2 consecutive Kazal-like domains span residues 23-81 (STND…AWCS) and 96-156 (KLEV…EEKC). 5 disulfides stabilise this stretch: cysteine 29-cysteine 62, cysteine 33-cysteine 55, cysteine 102-cysteine 135, cysteine 106-cysteine 128, and cysteine 114-cysteine 156.

This Drosophila simulans (Fruit fly) protein is Enhancer of split M1 protein.